Here is a 195-residue protein sequence, read N- to C-terminus: Probable nicotinate-nucleotide adenylyltransferase (195 aa).

The protein belongs to the NadD family.

The catalysed reaction is nicotinate beta-D-ribonucleotide + ATP + H(+) = deamido-NAD(+) + diphosphate. It participates in cofactor biosynthesis; NAD(+) biosynthesis; deamido-NAD(+) from nicotinate D-ribonucleotide: step 1/1. Its function is as follows. Catalyzes the reversible adenylation of nicotinate mononucleotide (NaMN) to nicotinic acid adenine dinucleotide (NaAD). In Chlorobaculum parvum (strain DSM 263 / NCIMB 8327) (Chlorobium vibrioforme subsp. thiosulfatophilum), this protein is Probable nicotinate-nucleotide adenylyltransferase.